The chain runs to 720 residues: Putative glutamine--fructose-6-phosphate aminotransferase [isomerizing] (720 aa).

Cys2 acts as the Nucleophile; for GATase activity in catalysis. Residues 2–321 (CGIFGYCNFL…DNDTAHIYDG (320 aa)) enclose the Glutamine amidotransferase type-2 domain. Positions 266-280 (STTSTFNHGSSTETP) are enriched in polar residues. A disordered region spans residues 266–285 (STTSTFNHGSSTETPAENGL). 2 SIS domains span residues 393–532 (WLTE…DLVS) and 565–710 (CDKK…VDLP).

It catalyses the reaction D-fructose 6-phosphate + L-glutamine = D-glucosamine 6-phosphate + L-glutamate. It functions in the pathway nucleotide-sugar biosynthesis; UDP-N-acetyl-alpha-D-glucosamine biosynthesis; alpha-D-glucosamine 6-phosphate from D-fructose 6-phosphate: step 1/1. Functionally, involved in amino sugar synthesis (formation of chitin, supplies the amino sugars of asparagine-linked oligosaccharides of glycoproteins). In Saccharomyces cerevisiae (strain JAY291) (Baker's yeast), this protein is Putative glutamine--fructose-6-phosphate aminotransferase [isomerizing].